Reading from the N-terminus, the 336-residue chain is Probable allantoicase 2 (336 aa).

The protein belongs to the allantoicase family.

It carries out the reaction allantoate + H2O = (S)-ureidoglycolate + urea. It functions in the pathway nitrogen metabolism; (S)-allantoin degradation; (S)-ureidoglycolate from allantoate (aminidohydrolase route): step 1/1. The sequence is that of Probable allantoicase 2 from Burkholderia pseudomallei (strain K96243).